The chain runs to 582 residues: Phosphoribosylaminoimidazole carboxylase (582 aa).

The 192-residue stretch at 114–305 (KKYLAERGVA…QFENHLRAIL (192 aa)) folds into the ATP-grasp domain. Position 143–200 (143–200 (AGRLGLPLMLKAKTLAYDGRGNSPLKSASSEDIQASLKFLGDRPLYAEGWAPFVKEVA)) interacts with ATP.

It in the C-terminal section; belongs to the AIR carboxylase family. Class I subfamily.

It catalyses the reaction 5-amino-1-(5-phospho-D-ribosyl)imidazole-4-carboxylate + H(+) = 5-amino-1-(5-phospho-beta-D-ribosyl)imidazole + CO2. Its pathway is purine metabolism; IMP biosynthesis via de novo pathway; 5-amino-1-(5-phospho-D-ribosyl)imidazole-4-carboxylate from 5-amino-1-(5-phospho-D-ribosyl)imidazole (carboxylase route): step 1/1. This chain is Phosphoribosylaminoimidazole carboxylase (ADE2), found in Cryptococcus neoformans var. neoformans serotype D (strain B-3501A) (Filobasidiella neoformans).